The primary structure comprises 144 residues: 3-hydroxyacyl-[acyl-carrier-protein] dehydratase FabZ (144 aa).

His-48 is a catalytic residue.

The protein belongs to the thioester dehydratase family. FabZ subfamily.

Its subcellular location is the cytoplasm. The catalysed reaction is a (3R)-hydroxyacyl-[ACP] = a (2E)-enoyl-[ACP] + H2O. Involved in unsaturated fatty acids biosynthesis. Catalyzes the dehydration of short chain beta-hydroxyacyl-ACPs and long chain saturated and unsaturated beta-hydroxyacyl-ACPs. This is 3-hydroxyacyl-[acyl-carrier-protein] dehydratase FabZ from Bacillus anthracis (strain A0248).